Here is a 365-residue protein sequence, read N- to C-terminus: NAD(P)H-quinone oxidoreductase subunit 1, chloroplastic (365 aa).

The next 6 helical transmembrane spans lie at 32–52, 98–118, 129–149, 257–279, 302–322, and 338–358; these read LFPILILVLGITIGVLVIVWL, YLFSIGPSIAVISILLGYLII, LSIGVFLWIAVSSIAPIGLLM, LFYVASYLNLLISSLFVTVLYLG, VFGTTIGIFITLAKTFLFLFI, and LLNLGWKFLLPISLGNLLLTT.

It belongs to the complex I subunit 1 family. As to quaternary structure, NDH is composed of at least 16 different subunits, 5 of which are encoded in the nucleus.

The protein localises to the plastid. The protein resides in the chloroplast thylakoid membrane. The enzyme catalyses a plastoquinone + NADH + (n+1) H(+)(in) = a plastoquinol + NAD(+) + n H(+)(out). It catalyses the reaction a plastoquinone + NADPH + (n+1) H(+)(in) = a plastoquinol + NADP(+) + n H(+)(out). NDH shuttles electrons from NAD(P)H:plastoquinone, via FMN and iron-sulfur (Fe-S) centers, to quinones in the photosynthetic chain and possibly in a chloroplast respiratory chain. The immediate electron acceptor for the enzyme in this species is believed to be plastoquinone. Couples the redox reaction to proton translocation, and thus conserves the redox energy in a proton gradient. In Spinacia oleracea (Spinach), this protein is NAD(P)H-quinone oxidoreductase subunit 1, chloroplastic.